Here is a 33-residue protein sequence, read N- to C-terminus: Potassium channel toxin alpha-KTx 10.4 (33 aa).

Cystine bridges form between C3-C22, C8-C27, and C12-C29.

The protein belongs to the short scorpion toxin superfamily. Potassium channel inhibitor family. Alpha-KTx 10 subfamily. Expressed by the venom gland.

Its subcellular location is the secreted. In terms of biological role, blocks human voltage-gated potassium channel Kv1.2/KCNA2 (IC(50)=3.6 nM) and Kv1.3/KCNA3 (IC(50)=72 nM). This Centruroides tecomanus (Scorpion) protein is Potassium channel toxin alpha-KTx 10.4.